A 439-amino-acid polypeptide reads, in one-letter code: Ribosomal protein uS12 methylthiotransferase RimO (439 aa).

One can recognise an MTTase N-terminal domain in the interval 7–122 (QTIAVIALGC…LPDLVFGKNF (116 aa)). The [4Fe-4S] cluster site is built by cysteine 16, cysteine 52, cysteine 85, cysteine 155, cysteine 159, and cysteine 162. Residues 141-369 (SSTIPSAYLK…NAQYNIFQAK (229 aa)) form the Radical SAM core domain.

Belongs to the methylthiotransferase family. RimO subfamily. Requires [4Fe-4S] cluster as cofactor.

The protein resides in the cytoplasm. The catalysed reaction is L-aspartate(89)-[ribosomal protein uS12]-hydrogen + (sulfur carrier)-SH + AH2 + 2 S-adenosyl-L-methionine = 3-methylsulfanyl-L-aspartate(89)-[ribosomal protein uS12]-hydrogen + (sulfur carrier)-H + 5'-deoxyadenosine + L-methionine + A + S-adenosyl-L-homocysteine + 2 H(+). Functionally, catalyzes the methylthiolation of an aspartic acid residue of ribosomal protein uS12. In Endomicrobium trichonymphae, this protein is Ribosomal protein uS12 methylthiotransferase RimO.